The sequence spans 333 residues: Tetraacyldisaccharide 4'-kinase (333 aa).

Residue 60–67 (TVGGTGKT) coordinates ATP.

It belongs to the LpxK family.

The enzyme catalyses a lipid A disaccharide + ATP = a lipid IVA + ADP + H(+). Its pathway is glycolipid biosynthesis; lipid IV(A) biosynthesis; lipid IV(A) from (3R)-3-hydroxytetradecanoyl-[acyl-carrier-protein] and UDP-N-acetyl-alpha-D-glucosamine: step 6/6. Its function is as follows. Transfers the gamma-phosphate of ATP to the 4'-position of a tetraacyldisaccharide 1-phosphate intermediate (termed DS-1-P) to form tetraacyldisaccharide 1,4'-bis-phosphate (lipid IVA). This Pseudomonas putida (strain ATCC 700007 / DSM 6899 / JCM 31910 / BCRC 17059 / LMG 24140 / F1) protein is Tetraacyldisaccharide 4'-kinase.